Reading from the N-terminus, the 188-residue chain is PRA1 family protein 3 (188 aa).

The residue at position 1 (M1) is an N-acetylmethionine. Residues 1–35 lie on the Cytoplasmic side of the membrane; the sequence is MDVNLAPLRAWDDFFPGSDRFARPDFRDISKWNNR. 2 consecutive transmembrane segments (helical) span residues 36–56 and 57–77; these read VVSNLLYYQTNYLVVAAMMIS and VVGFLSPFNMILGGIIVVLVF. Residues 78-92 are Cytoplasmic-facing; it reads TGFVWAAHNKDILRR. 2 helical membrane-spanning segments follow: residues 93 to 113 and 115 to 135; these read MKKQYPTAFVMVVMLASYFLI and MFGGVMVFVFGITFPLLLMFI. Positions 103-117 are required for homodimer formation and heterodimer formation with ARL6IP1; that stretch reads MVVMLASYFLISMFG. The Cytoplasmic portion of the chain corresponds to 136-188; sequence HASLRLRNLKNKLENKMEGIGLKKTPMGIILDALEQQEDSINKFADYISKARE. The targeting to endoplasmic reticulum membrane stretch occupies residues 136–188; sequence HASLRLRNLKNKLENKMEGIGLKKTPMGIILDALEQQEDSINKFADYISKARE.

This sequence belongs to the PRA1 family. Homodimer. Heterodimer with ARL6IP1. Forms multimers. Interacts with ARL6. Interacts with prenylated RAB1A and RAB3A. Interacts with SLC1A1/EAAC1. Interacts with RTN2 (via first transmembrane domain). Does not interact with VAMP1, VAMP2 or VAMP3. Ubiquitous. Most abundant in heart and brain. In the embryonic brain cortex, expressed in neurons and astrocytes.

It is found in the endoplasmic reticulum membrane. The protein localises to the cell membrane. It localises to the cytoplasm. The protein resides in the cytoskeleton. Its function is as follows. Regulates intracellular concentrations of taurine and glutamate. Negatively modulates SLC1A1/EAAC1 glutamate transport activity by decreasing its affinity for glutamate in a PKC activity-dependent manner. Plays a role in the retention of SLC1A1/EAAC1 in the endoplasmic reticulum. The protein is PRA1 family protein 3 (Arl6ip5) of Rattus norvegicus (Rat).